A 249-amino-acid polypeptide reads, in one-letter code: ATP synthase subunit a, chloroplastic (249 aa).

5 helical membrane-spanning segments follow: residues 40–60, 97–117, 136–156, 201–221, and 222–242; these read QVLI…IVAV, VPFI…GALL, INTT…AGLS, LVVV…VMFL, and GLFT…AYIG.

This sequence belongs to the ATPase A chain family. F-type ATPases have 2 components, CF(1) - the catalytic core - and CF(0) - the membrane proton channel. CF(1) has five subunits: alpha(3), beta(3), gamma(1), delta(1), epsilon(1). CF(0) has four main subunits: a, b, b' and c.

The protein localises to the plastid. It localises to the chloroplast thylakoid membrane. Its function is as follows. Key component of the proton channel; it plays a direct role in the translocation of protons across the membrane. This is ATP synthase subunit a, chloroplastic from Manihot esculenta (Cassava).